Here is a 439-residue protein sequence, read N- to C-terminus: Serine/threonine-protein kinase 2 (439 aa).

The Protein kinase domain maps to 87–439 (NDDFYHISTG…IFSDWINGRN (353 aa)). Residues 93–101 (ISTGGYGIV) and K117 contribute to the ATP site. Residue D307 is the Proton acceptor of the active site.

It belongs to the protein kinase superfamily. Ser/Thr protein kinase family. Phosphorylated in vivo. Autophosphorylated in vitro.

Its subcellular location is the host endoplasmic reticulum. It localises to the host endoplasmic reticulum-Golgi intermediate compartment. It carries out the reaction L-seryl-[protein] + ATP = O-phospho-L-seryl-[protein] + ADP + H(+). The enzyme catalyses L-threonyl-[protein] + ATP = O-phospho-L-threonyl-[protein] + ADP + H(+). In terms of biological role, essential serine-protein kinase involved in the early stage of virion morphogenesis. This chain is Serine/threonine-protein kinase 2 (OPG054), found in Monkeypox virus.